The primary structure comprises 2407 residues: Daf-12-interacting protein 1 (2407 aa).

Positions 90–112 are enriched in low complexity; the sequence is QNSSMASMSSTPSSGQSSSPRNA. The tract at residues 90–152 is disordered; the sequence is QNSSMASMSS…PHLSVQSQQR (63 aa). The 59-residue stretch at 277 to 335 folds into the RRM domain; the sequence is CSVHVPHLDRHSPDHYRRRFESYGQVIDVDMVKSNDNKAFAVVQFTNIDDAQKALQDTN. 11 disordered regions span residues 439–632, 737–767, 785–849, 874–896, 921–986, 993–1012, 1025–1844, 1858–1918, 1932–1976, 2077–2103, and 2172–2200; these read EVAA…LELD, ATDS…TNRL, LCIG…GRPA, PTHD…ETMV, LIAA…PSNA, RSQS…TPVV, SNQP…EDSE, IAQE…VNNH, LQPA…QQSD, EENE…LAAA, and SIQR…VNQN. Over residues 443–456 the composition is skewed to polar residues; sequence RSSSPTSKSENDQG. Residues 512-529 show a composition bias toward acidic residues; the sequence is EDSDEQNDVDEEDDEDVV. Composition is skewed to basic and acidic residues over residues 530-541, 548-564, and 573-586; these read SEEKRHEPEEGK, GHRD…DSSE, and SHHE…KDSE. Over residues 587 to 603 the composition is skewed to polar residues; the sequence is AYQSRSFSPLNYQSQSP. Residues 618–627 show a composition bias toward low complexity; it reads SPTTSSASSS. 2 stretches are compositionally biased toward polar residues: residues 791–826 and 837–849; these read TPST…TPRS and SRHN…GRPA. The segment covering 924–946 has biased composition (polar residues); it reads ATSTGTHSVSSSAHSTPRHSISG. The span at 966 to 978 shows a compositional bias: basic and acidic residues; it reads SRPEKVQIRHDTI. Over residues 1043 to 1052 the composition is skewed to polar residues; the sequence is SALQNIQNHQ. A compositionally biased stretch (low complexity) spans 1053–1070; it reads PPHSNANSTPSTPSTSTH. Basic and acidic residues predominate over residues 1086 to 1153; sequence KEKEEREREA…KVRKKAEKEK (68 aa). Residues 1165–1177 show a composition bias toward acidic residues; that stretch reads SDESDSDSNDELD. Basic and acidic residues-rich tracts occupy residues 1178–1195, 1218–1227, 1279–1293, 1304–1320, 1335–1355, and 1376–1398; these read LDVR…KDHQ, RAHDSFEKMQ, ADQR…EKGE, NDAG…DREN, QGER…DAAA, and RRSS…PHED. Low complexity-rich tracts occupy residues 1456 to 1471 and 1488 to 1498; these read PKHL…TKRS and TTSSTSTATTS. Polar residues predominate over residues 1534–1547; it reads SMNSAADSPMSTTG. Over residues 1570 to 1595 the composition is skewed to low complexity; that stretch reads SSSGQHDSSSGSSSDSSSSDGSTSSD. 2 stretches are compositionally biased toward basic and acidic residues: residues 1679–1691 and 1703–1726; these read SEEH…HGDS and EHQE…HEEQ. Residues 1749-1770 are compositionally biased toward polar residues; that stretch reads TQAQEKSAHTLISDQETDQAVQ. A compositionally biased stretch (basic and acidic residues) spans 1792–1805; it reads NEKEVSGKDPHNIK. Polar residues predominate over residues 1809 to 1826; that stretch reads PLNNGHTDLLFSPSSSAH. Basic and acidic residues-rich tracts occupy residues 1827 to 1836 and 1873 to 1892; these read ASEKQSTKSE and EEVK…KMEE. 2 stretches are compositionally biased toward polar residues: residues 1895-1911 and 1932-1942; these read EQTP…SQDT and LQPASQHQVAQ. A compositionally biased stretch (low complexity) spans 1962–1975; that stretch reads SQQSQPSPMSSQQS. A coiled-coil region spans residues 2049–2110; sequence NQMMQAKMKQ…AAATAAATMA (62 aa). Positions 2077 to 2099 are enriched in basic and acidic residues; the sequence is EENERKVEEDRREKQRKEEERQR. Low complexity predominate over residues 2176–2186; sequence PSSTASTSSNP. One can recognise an SPOC domain in the interval 2213–2383; sequence QRWFYKHFPM…TRYLLIVFTN (171 aa).

As to quaternary structure, isoform d interacts with daf-12. Isoform d is widely expressed: detected in the hypodermis, seam cells, intestine, somatic gonad, neurons, vulval precursors, body wall muscle and pharynx.

It localises to the nucleus. Functionally, probable transcriptional corepressor which modulates activity of the nuclear hormone receptor daf-12 to regulate the dauer diapause. The protein is Daf-12-interacting protein 1 of Caenorhabditis elegans.